The chain runs to 610 residues: Phragmoplastin DRP1A (610 aa).

M1 is subject to N-acetylmethionine. The region spanning 31 to 300 (WDSLPAIAVV…LERVIKSRIP (270 aa)) is the Dynamin-type G domain. A G1 motif region spans residues 41-48 (GGQSSGKS). 44 to 49 (SSGKSS) contributes to the GTP binding site. The segment at 67-69 (VTR) is G2 motif. The segment at 142-145 (DLPG) is G3 motif. The G4 motif stretch occupies residues 211–214 (TKID). GTP is bound by residues 212–217 (KIDLMD) and 242–245 (NRSQ). The tract at residues 241-244 (VNRS) is G5 motif. The region spanning 518 to 610 (LRRIGSNVLS…SEIDAVAWSK (93 aa)) is the GED domain.

It belongs to the TRAFAC class dynamin-like GTPase superfamily. Dynamin/Fzo/YdjA family. Forms homodimer and may homooligomerize and heterooligomerize to form the phragmoplastin complex. Interacts with AGD3/VAN3. May interact with CALS1. Binds to AHK2. Binds to SH3P2. Forms a complex made of SH3P2 and DRP1A and triggers its accumulation at the cell plate. Interacts with DRP2B at the plasma membrane and in forming clathrin-coated vesicles (CCV). Binds to PHIP1. As to expression, ubiquitous. Expressed in leaves (at protein level).

The protein localises to the cytoplasm. It is found in the cytoskeleton. The protein resides in the phragmoplast. It localises to the cell cortex. Its subcellular location is the cytoplasmic vesicle. The protein localises to the clathrin-coated vesicle. It is found in the cell membrane. The enzyme catalyses GTP + H2O = GDP + phosphate + H(+). Its function is as follows. Microtubule-associated force-producing protein that is targeted to at the leading edges of the forming cell plate during cytokinesis. Also plays a major role in plasma membrane maintenance and cell wall integrity with implications in vesicular trafficking, polar cell expansion, vascular formation, and other aspects of plant growth and development, including stigmatic papillae expansion. Collaboratively with DRP2B, participates in clathrin-coated vesicle formation during endocytosis. Necessary for BOR1 polar localization in low-boron (B) conditions as well as for BOR1 endocytosis and subsequent degradation under high-concentration of boron. Has a GTPase activity. Required for the sterols-dependent dynamic high lipid order observed at the cell plate of dividing cells. Together with SH3P2, converts the fused vesicles to tubular structures at the cell plate and phragmoplasts during cytokinesis. With DRP2B and PIP5K3, required for the precise coordination of polar ARAC3/ROP6 and ARAC4/ROP2 placement and subsequent root hair positioning during planar polarity formation in root hair-forming cells, probably by mediating the correct basal-to-planar polarity switching of D6PK into the polar, lipid-enriched domain. Involved in endocytosis required for cellulose deposition during cell wall formation and elongation. Interacts with plasma membrane-mimetic liposomes and induces their clustering. The chain is Phragmoplastin DRP1A from Arabidopsis thaliana (Mouse-ear cress).